The sequence spans 381 residues: MVSLEQAEQIAAAIEVPDWVLTKSAALVYSCFGSAANAFESSIKINFPAQHAFVEAWMRARSHPFAERLPYLNPWHVIASILAYLSLIVTLRLLHRVLGKFSCRTLGLVHNLGLHLLSLYMSLGLMISARAAGYSLWNNAVGTSPAEWRIAKLIWLFYVSKVVEWVDTVIMLLKQNYHQVTFLHVYHHTTVFVLWWLALLVAPGGESYYSAMVNSGVHVFMYGYYFLTLLFPSGIVRDVLSKFKFAITKGQMWQFVFNCLQSAYDLVWVPREELKYSAELLQILFWYMISLLALFGNFLVKNKKFSHRRCVDAATASGAKEDTAARSHGDRTHRTRVKAGMTNMQLERLKNEKSTEMKLLMRKNGNGNGQKASLQAMAGSR.

Transmembrane regions (helical) follow at residues Ile10 to Ser30, Leu69 to Val89, Gly107 to Ile127, Leu153 to Leu173, Phe182 to Ala202, Gly216 to Val236, and Leu280 to Val300. The HxxHH motif signature appears at His184–His188. Residue His187 is the Nucleophile of the active site. The tract at residues Arg362–Arg381 is disordered.

Belongs to the ELO family.

The protein resides in the membrane. The protein operates within lipid metabolism; polyunsaturated fatty acid biosynthesis. In terms of biological role, involved in the synthesis of fatty acids. Elongates C18 polyunsaturated fatty acids (PUFAs) with a preference for Delta6 PUFAs. The sequence is that of Fatty acid elongase 6 from Leishmania major.